The sequence spans 620 residues: Toxin coregulated pilus biosynthesis protein I (620 aa).

The Methyl-accepting transducer domain maps to 344 to 580 (TMNDLSIKQT…DVAKQMEDIR (237 aa)).

Belongs to the methyl-accepting chemotaxis (MCP) protein family.

The protein localises to the cell inner membrane. Functionally, may function as an environmental regulator of TCP biogenesis. Negatively regulates the synthesis of the major pilin subunit of TCP (TcpA). This chain is Toxin coregulated pilus biosynthesis protein I (tcpI), found in Vibrio cholerae serotype O1 (strain ATCC 39315 / El Tor Inaba N16961).